The sequence spans 223 residues: Small ribosomal subunit protein uS5 (223 aa).

The span at 1 to 15 (MTEAVAAEATETAPA) shows a compositional bias: low complexity. The interval 1–51 (MTEAVAAEATETAPATDDRRGGRRGERGDRGQGRGDRGGRGGRDGGREAEK) is disordered. The segment covering 16–51 (TDDRRGGRRGERGDRGQGRGDRGGRGGRDGGREAEK) has biased composition (basic and acidic residues). An S5 DRBM domain is found at 54 to 117 (FVERVVTINR…EEAKKSFFRV (64 aa)).

Belongs to the universal ribosomal protein uS5 family. In terms of assembly, part of the 30S ribosomal subunit. Contacts proteins S4 and S8.

With S4 and S12 plays an important role in translational accuracy. In terms of biological role, located at the back of the 30S subunit body where it stabilizes the conformation of the head with respect to the body. The chain is Small ribosomal subunit protein uS5 from Paenarthrobacter aurescens (strain TC1).